Consider the following 472-residue polypeptide: UDP-glucuronosyltransferase (472 aa).

Residues N59, N227, and N377 are each glycosylated (N-linked (GlcNAc...) asparagine). The helical transmembrane segment at 436–456 threads the bilayer; the sequence is FGFILLILLTVLWVTLKCCLF.

Belongs to the UDP-glycosyltransferase family.

It localises to the microsome membrane. Its subcellular location is the endoplasmic reticulum membrane. The catalysed reaction is glucuronate acceptor + UDP-alpha-D-glucuronate = acceptor beta-D-glucuronoside + UDP + H(+). In terms of biological role, UDPGT is of major importance in the conjugation and subsequent elimination of potentially toxic xenobiotics and endogenous compounds. The polypeptide is UDP-glucuronosyltransferase (ugt3) (Pleuronectes platessa (European plaice)).